Here is a 201-residue protein sequence, read N- to C-terminus: Indolepyruvate oxidoreductase subunit IorB (201 aa).

In terms of assembly, heterodimer of the IorA and IorB subunits.

The enzyme catalyses indole-3-pyruvate + 2 oxidized [2Fe-2S]-[ferredoxin] + CoA = (indol-3-yl)acetyl-CoA + 2 reduced [2Fe-2S]-[ferredoxin] + CO2 + H(+). Its function is as follows. Catalyzes the ferredoxin-dependent oxidative decarboxylation of arylpyruvates. The polypeptide is Indolepyruvate oxidoreductase subunit IorB (iorB) (Archaeoglobus fulgidus (strain ATCC 49558 / DSM 4304 / JCM 9628 / NBRC 100126 / VC-16)).